Reading from the N-terminus, the 388-residue chain is Type II secretion system protein F (388 aa).

Positions 1-28 are disordered; sequence MTEGDSARQVRQQLREQGLTPLEVNETT. Topologically, residues 1-153 are cytoplasmic; the sequence is MTEGDSARQV…HMRTKLLQAM (153 aa). Ca(2+)-binding residues include Glu-79, Asn-133, and Asp-137. Residues 154–174 form a helical membrane-spanning segment; sequence IYPIVLTLVAVGVISILLTAV. Over 175 to 205 the chain is Periplasmic; that stretch reads VPKVVAQFEHMGQQLPATTRFLIGTSELMQH. The chain crosses the membrane as a helical span at residues 206–226; that stretch reads YGLWFLLLLFIGGFVWRWWLT. Topologically, residues 227-350 are cytoplasmic; it reads DEKRRRHWHQ…QDREFETQVN (124 aa). The chain crosses the membrane as a helical span at residues 351–371; that stretch reads IALGVFEPLLVVSMAGVVLFI. Residues 372 to 388 are Periplasmic-facing; it reads VMSILQPILELNNMVNL.

Belongs to the GSP F family. As to quaternary structure, type II secretion system is composed of four main components: the outer membrane complex, the inner membrane complex, the cytoplasmic secretion ATPase and the periplasm-spanning pseudopilus. Homodimer. Interacts with ExeE and ExeL components.

It is found in the cell inner membrane. Its function is as follows. Component of the type II secretion system inner membrane complex required for the energy-dependent secretion of extracellular factors such as proteases and toxins from the periplasm. This Aeromonas hydrophila protein is Type II secretion system protein F (exeF).